A 575-amino-acid polypeptide reads, in one-letter code: Physarolisin (575 aa).

Positions 1–18 are cleaved as a signal peptide; sequence MRLLSLLFLLGLATLSFA. A propeptide spans 19–173 (removed in mature form); that stretch reads VRSQWAQQGR…SIKNARTQVG (155 aa). Residues 179 to 574 form the Peptidase S53 domain; the sequence is YIVPYVIFDL…SKLLAFVQTL (396 aa). The N-linked (GlcNAc...) asparagine glycan is linked to Asn-200. Active-site charge relay system residues include Glu-248 and Asp-252. 4 N-linked (GlcNAc...) asparagine glycosylation sites follow: Asn-262, Asn-307, Asn-380, and Asn-453. The active-site Charge relay system is Ser-484. 4 residues coordinate Ca(2+): Asp-529, Ile-530, Gly-552, and Asp-554.

Ca(2+) is required as a cofactor. In terms of processing, autocatalytically processed. Post-translationally, N-glycosylated.

It catalyses the reaction Milk clotting activity. Preferential cleavage of 8-Gly-|-Ser-9 in B chain of insulin most rapidly, followed by 11-Leu-|-Val-12, 19-Cys(SO(3)H)-|-Gly and 24-Phe-|-Phe-25. No action on Ac-Phe-Tyr(I)2.. Inhibited by diisopropylfluorophosphate (DFP) and diazoacetyl-D,L-norleucine methyl ester (DAN). The protein is Physarolisin of Physarum polycephalum (Slime mold).